Here is a 254-residue protein sequence, read N- to C-terminus: 5-oxoprolinase subunit A (254 aa).

It belongs to the LamB/PxpA family. In terms of assembly, forms a complex composed of PxpA, PxpB and PxpC.

The catalysed reaction is 5-oxo-L-proline + ATP + 2 H2O = L-glutamate + ADP + phosphate + H(+). Catalyzes the cleavage of 5-oxoproline to form L-glutamate coupled to the hydrolysis of ATP to ADP and inorganic phosphate. This is 5-oxoprolinase subunit A from Rhodopseudomonas palustris (strain BisB5).